The chain runs to 246 residues: DNA repair protein RecO (246 aa).

The protein belongs to the RecO family.

Functionally, involved in DNA repair and RecF pathway recombination. This chain is DNA repair protein RecO, found in Cutibacterium acnes (strain DSM 16379 / KPA171202) (Propionibacterium acnes).